Here is a 416-residue protein sequence, read N- to C-terminus: 2-aminoadipate transaminase (416 aa).

Residues 102–103 (GA) and Gln-233 each bind pyridoxal 5'-phosphate. Lys-259 carries the N6-(pyridoxal phosphate)lysine modification. Thr-288 serves as a coordination point for pyridoxal 5'-phosphate.

This sequence belongs to the class-III pyridoxal-phosphate-dependent aminotransferase family. Pyridoxal 5'-phosphate is required as a cofactor.

The enzyme catalyses L-2-aminoadipate + 2-oxoglutarate = 2-oxoadipate + L-glutamate. It catalyses the reaction 5-aminopentanoate + 2-oxoglutarate = 5-oxopentanoate + L-glutamate. Its pathway is amino-acid degradation. Catalyzes the conversion of 2-aminoadipate (2AA) to 2-oxoadipate (2OA). Is most active on L-2-aminoadipate (L-2AA) and shows only weak activity on the enantiomer, D-2-aminoadipate (D-2AA). Shows moderate activity on 5-aminovalerate (5AVA) and weak activity toward 4-aminobutyrate (GABA). Is involved in a D-lysine catabolic pathway. In Pseudomonas putida (strain ATCC 47054 / DSM 6125 / CFBP 8728 / NCIMB 11950 / KT2440), this protein is 2-aminoadipate transaminase.